A 234-amino-acid chain; its full sequence is NAD-dependent protein deacylase (234 aa).

The Deacetylase sirtuin-type domain occupies 1 to 234 (MKNLVVLTGA…ELKQLLIPAP (234 aa)). Residue 9–28 (GAGMSAESGISTFRDAGGLW) coordinates NAD(+). Positions 53 and 56 each coordinate substrate. Residue 86 to 89 (QNVD) coordinates NAD(+). Residue histidine 104 is the Proton acceptor of the active site. 175–177 (GTS) contributes to the NAD(+) binding site.

Belongs to the sirtuin family. Class III subfamily.

It localises to the cytoplasm. The catalysed reaction is N(6)-acetyl-L-lysyl-[protein] + NAD(+) + H2O = 2''-O-acetyl-ADP-D-ribose + nicotinamide + L-lysyl-[protein]. The enzyme catalyses N(6)-succinyl-L-lysyl-[protein] + NAD(+) + H2O = 2''-O-succinyl-ADP-D-ribose + nicotinamide + L-lysyl-[protein]. Functionally, NAD-dependent lysine deacetylase and desuccinylase that specifically removes acetyl and succinyl groups on target proteins. Modulates the activities of several proteins which are inactive in their acylated form. The chain is NAD-dependent protein deacylase from Bacteroides thetaiotaomicron (strain ATCC 29148 / DSM 2079 / JCM 5827 / CCUG 10774 / NCTC 10582 / VPI-5482 / E50).